A 233-amino-acid chain; its full sequence is tRNA (guanine-N(1)-)-methyltransferase (233 aa).

S-adenosyl-L-methionine-binding positions include glycine 121 and 140 to 145; that span reads IGDYIL.

This sequence belongs to the RNA methyltransferase TrmD family. In terms of assembly, homodimer.

It localises to the cytoplasm. The enzyme catalyses guanosine(37) in tRNA + S-adenosyl-L-methionine = N(1)-methylguanosine(37) in tRNA + S-adenosyl-L-homocysteine + H(+). Specifically methylates guanosine-37 in various tRNAs. This is tRNA (guanine-N(1)-)-methyltransferase from Endomicrobium trichonymphae.